Reading from the N-terminus, the 1155-residue chain is DNA-directed RNA polymerase subunit beta (1155 aa).

This sequence belongs to the RNA polymerase beta chain family. In terms of assembly, the RNAP catalytic core consists of 2 alpha, 1 beta, 1 beta' and 1 omega subunit. When a sigma factor is associated with the core the holoenzyme is formed, which can initiate transcription.

It catalyses the reaction RNA(n) + a ribonucleoside 5'-triphosphate = RNA(n+1) + diphosphate. Its function is as follows. DNA-dependent RNA polymerase catalyzes the transcription of DNA into RNA using the four ribonucleoside triphosphates as substrates. This Thermobifida fusca (strain YX) protein is DNA-directed RNA polymerase subunit beta.